We begin with the raw amino-acid sequence, 338 residues long: Glycerol-3-phosphate dehydrogenase [NAD(P)+] (338 aa).

4 residues coordinate NADPH: Ser14, Tyr15, His35, and Lys109. 3 residues coordinate sn-glycerol 3-phosphate: Lys109, Gly138, and Thr140. Ala142 contacts NADPH. Sn-glycerol 3-phosphate contacts are provided by Lys194, Asp247, Ser257, Arg258, and Asn259. The active-site Proton acceptor is the Lys194. Residue Arg258 coordinates NADPH. 2 residues coordinate NADPH: Val282 and Glu284.

This sequence belongs to the NAD-dependent glycerol-3-phosphate dehydrogenase family.

The protein localises to the cytoplasm. The enzyme catalyses sn-glycerol 3-phosphate + NAD(+) = dihydroxyacetone phosphate + NADH + H(+). It carries out the reaction sn-glycerol 3-phosphate + NADP(+) = dihydroxyacetone phosphate + NADPH + H(+). Its pathway is membrane lipid metabolism; glycerophospholipid metabolism. Its function is as follows. Catalyzes the reduction of the glycolytic intermediate dihydroxyacetone phosphate (DHAP) to sn-glycerol 3-phosphate (G3P), the key precursor for phospholipid synthesis. The protein is Glycerol-3-phosphate dehydrogenase [NAD(P)+] of Sodalis glossinidius (strain morsitans).